Consider the following 362-residue polypeptide: MEKDSKVIEKEGNKGFTKSIISTVKNIKLGYGMDIYQMSTPASLIAPYSSLTYISDSFSKNFEILIKANSIENDLDRLLEIFKYITTIFIINNNACGKPIVPIVGETQRFKFSNKDEDGNEFNDSFHCAEHVQNSPFPLSVSSTVNEKEGIELCYNYAAKILFMATYFRINIDEAETFIKFNKFNETYNIILPTLYTRIFRGFSEYSGKLKIEPTKSNYYIDANFQSKPLIGGKYNYFEAYVSKKDTDEKIYKIFGQWDKEQQILDFENYQTDFFFKRPQQFYEKQLPNEILPTDSSVVWKGLIDAHNCGNNKLKLKEKTKVDEDQKLIENQRKKENINFKPKFFIKNKETDKWELDKFNKY.

It belongs to the OSBP family.

The polypeptide is Oxysterol-binding protein 5 (osbE) (Dictyostelium discoideum (Social amoeba)).